We begin with the raw amino-acid sequence, 510 residues long: MAFLLFFVFVTAAVLCFVVPAFLLLCTSVQRRRDVGQGGGRDWQKKKKLRLPPGSMGWPYVGETLQLYSQDPNVFFASKQKRYGEIFKTNLLGCPCVMLASPEAARFVLVSQARLFKPTYPPSKERMIGPSALFFHQGEYHLRLRRLVQAALAPDSLRALVPDVDAAVAATLAAWSGGHVASTFHAMKKLSFDVGVVTIFGGRLGRRHREELRTNYSVVERGYNCFPNRFPGTLYHKAIQARKRLRAILSEIVAERRARGGGGGGGGDDLLGGLMRSRDDGTAGAVALLTDDQIADNVVGVLFAAQDTTASVLTWILKYLHDSPKLLEAVKAEQMAIYVANEGGKRPLTWTQTRSMTLTHQVILESLRMASIISFTFREAVADVEYKGFLIPKGWKVMPLFRNIHHNPDYFQDPQKFDPSRFKVAPRPSTFLPFGSGVHACPGNELAKLEMLVLVHRLVTAYRWEIVGASDEVEYSPFPVPRGGLNAKLWKQEAEEDMYMAMGTITAAGA.

A helical membrane pass occupies residues 3-23 (FLLFFVFVTAAVLCFVVPAFL). Heme is bound at residue Cys441.

Belongs to the cytochrome P450 family. Heme is required as a cofactor.

Its subcellular location is the membrane. It catalyses the reaction 2-cis-(+)-abscisate + reduced [NADPH--hemoprotein reductase] + O2 = (+)-8'-hydroxyabscisate + oxidized [NADPH--hemoprotein reductase] + H2O + H(+). It participates in plant hormone degradation; abscisic acid degradation. In terms of biological role, involved in the oxidative degradation of abscisic acid. The chain is Abscisic acid 8'-hydroxylase 2 (CYP707A6) from Oryza sativa subsp. japonica (Rice).